Consider the following 479-residue polypeptide: Glycerol kinase 5 (479 aa).

2 residues coordinate ATP: Ser-20 and Ser-21. Glycerol contacts are provided by Arg-90, Asp-267, and Gln-268. Positions 289, 332, and 432 each coordinate ATP.

This sequence belongs to the FGGY kinase family.

The protein localises to the cytoplasm. The enzyme catalyses glycerol + ATP = sn-glycerol 3-phosphate + ADP + H(+). The protein operates within polyol metabolism; glycerol degradation via glycerol kinase pathway; sn-glycerol 3-phosphate from glycerol: step 1/1. Skin-specific kinase that plays a key role in glycerol metabolism, catalyzing its phosphorylation to produce sn-glycerol 3-phosphate. Involved in skin-specific regulation of sterol regulatory element-binding protein (SREBP) processing and lipid biosynthesis. This chain is Glycerol kinase 5 (gk5), found in Xenopus laevis (African clawed frog).